A 324-amino-acid polypeptide reads, in one-letter code: Malate dehydrogenase (324 aa).

NAD(+) is bound by residues 7–13 (GAAGGIG) and Asp34. Substrate contacts are provided by Arg88 and Arg94. NAD(+)-binding positions include Asn101 and 124–126 (VTN). Substrate-binding residues include Asn126 and Arg160. His184 (proton acceptor) is an active-site residue. Met238 is a binding site for NAD(+).

It belongs to the LDH/MDH superfamily. MDH type 1 family. In terms of assembly, homodimer.

The catalysed reaction is (S)-malate + NAD(+) = oxaloacetate + NADH + H(+). Functionally, catalyzes the reversible oxidation of malate to oxaloacetate. The polypeptide is Malate dehydrogenase (Haemophilus ducreyi (strain 35000HP / ATCC 700724)).